The primary structure comprises 442 residues: F-box/kelch-repeat protein OR23 (442 aa).

The region spanning 37–84 (TLIPGLSNDVGRLILSFVPYPHISRIKSTCKSWYAFLSSKTLISLRHS) is the F-box domain. Kelch repeat units lie at residues 93 to 139 (LSHL…NFVA), 145 to 200 (YVYV…AMPG), 204 to 257 (RIIV…LVEN), 269 to 328 (EFWV…KIVA), 330 to 377 (DCGK…ALNG), and 390 to 437 (LMDT…TTVM).

This Arabidopsis thaliana (Mouse-ear cress) protein is F-box/kelch-repeat protein OR23 (OR23).